We begin with the raw amino-acid sequence, 102 residues long: Alpha-ketoglutarate dehydrogenase component 4 (102 aa).

Gly-2 carries the N-acetylglycine modification. Lys-4 is modified (N6-succinyllysine). The segment at 23 to 70 is disordered; it reads KFPNRRDKPKLSASEALGSAALPSHSSAISQHSKGSTSPDLLMHQGPP. Positions 33–46 are enriched in low complexity; it reads LSASEALGSAALPS. A compositionally biased stretch (polar residues) spans 47 to 61; it reads HSSAISQHSKGSTSP. A phosphoserine mark is found at Ser-48, Ser-60, and Ser-89.

This sequence belongs to the alpha-ketoglutarate dehydrogenase component 4 family. Component of the 2-oxoglutarate dehydrogenase complex (OGDHC), composed of OGDH (2-oxoglutarate dehydrogenase; also called E1 subunit), DLST (dihydrolipoamide succinyltransferase; also called E2 subunit) and DLD (dihydrolipoamide dehydrogenase; also called E3 subunit), and the assembly factor KGD4. Within OGDHC complex, interacts (via N-terminus) with E3 subunit and (via C-terminus) with E2 subunit.

The protein resides in the mitochondrion. Molecular adapter that is necessary to form a stable 2-oxoglutarate dehydrogenase enzyme complex (OGDHC). Enables the specific recruitment of E3 subunit to E2 subunit in the 2-oxoglutarate dehydrogenase complex (OGDHC). The protein is Alpha-ketoglutarate dehydrogenase component 4 of Mus musculus (Mouse).